The chain runs to 338 residues: 1-aminocyclopropane-1-carboxylate deaminase (338 aa).

K51 bears the N6-(pyridoxal phosphate)lysine mark. Catalysis depends on S78, which acts as the Nucleophile.

Belongs to the ACC deaminase/D-cysteine desulfhydrase family. Homotrimer. It depends on pyridoxal 5'-phosphate as a cofactor.

It carries out the reaction 1-aminocyclopropane-1-carboxylate + H2O = 2-oxobutanoate + NH4(+). Catalyzes a cyclopropane ring-opening reaction, the irreversible conversion of 1-aminocyclopropane-1-carboxylate (ACC) to ammonia and alpha-ketobutyrate. Allows growth on ACC as a nitrogen source. This Paraburkholderia phytofirmans (strain DSM 17436 / LMG 22146 / PsJN) (Burkholderia phytofirmans) protein is 1-aminocyclopropane-1-carboxylate deaminase.